Reading from the N-terminus, the 85-residue chain is U4-theraphotoxin-Hhn1s (85 aa).

The N-terminal stretch at 1-22 (MKVTLIAILTCAAVLVLHTTAA) is a signal peptide. A propeptide spanning residues 23–48 (EELEAESQLMEVGMPDTELAAVDEER) is cleaved from the precursor. 3 cysteine pairs are disulfide-bonded: Cys52/Cys66, Cys56/Cys77, and Cys71/Cys82.

It belongs to the neurotoxin 12 (Hwtx-2) family. 02 (Hwtx-2) subfamily. Expressed by the venom gland.

It is found in the secreted. In terms of biological role, postsynaptic neurotoxin. This is U4-theraphotoxin-Hhn1s from Cyriopagopus hainanus (Chinese bird spider).